Here is a 692-residue protein sequence, read N- to C-terminus: Elongation factor G (692 aa).

A tr-type G domain is found at 8–282 (KDTRNIGIMA…AVLDYLPSPL (275 aa)). GTP is bound by residues 17–24 (AHIDAGKT), 81–85 (DTPGH), and 135–138 (NKMD).

It belongs to the TRAFAC class translation factor GTPase superfamily. Classic translation factor GTPase family. EF-G/EF-2 subfamily.

The protein resides in the cytoplasm. In terms of biological role, catalyzes the GTP-dependent ribosomal translocation step during translation elongation. During this step, the ribosome changes from the pre-translocational (PRE) to the post-translocational (POST) state as the newly formed A-site-bound peptidyl-tRNA and P-site-bound deacylated tRNA move to the P and E sites, respectively. Catalyzes the coordinated movement of the two tRNA molecules, the mRNA and conformational changes in the ribosome. This is Elongation factor G from Shouchella clausii (strain KSM-K16) (Alkalihalobacillus clausii).